The chain runs to 382 residues: MIKPNIPAPVRPNLPLSSPDSVLPQAMKDPFNIFDDDEPSEDTSSSEQSSRPPPREMMISSSCALREQTNSSFLNRFFPEDDESSENGAALAEINQLLRDGPEAPPREPTPKEARRPEKMQKIFFQTYGNDFKVEAHGDRLLAQNQRVVRLFERGRILGLGVKMNIPMGYCAVTNCFHPPGCVCVMDMAGYGPSDIRAQIVNISSGPLELPPNMLQIHIHMLPMLLPEPWQTINLMAPHQGDTYFDLRLRRPLSLPPRASKNLKFEAGHLCEEDARRCLVIPCRHLATKRVLLDPTVWRPNSLAVLRVLNASDEHVDLEAGMAMAKIIFTTPGITPFKPSLTSVMMSFDVPRSDLKLVKGGRRDYYRAEERMRSGRDSSNEG.

Over residues 1 to 12 (MIKPNIPAPVRP) the composition is skewed to pro residues. Disordered regions lie at residues 1–60 (MIKP…MMIS) and 97–118 (LLRDGPEAPPREPTPKEARRPE). A compositionally biased stretch (basic and acidic residues) spans 100-118 (DGPEAPPREPTPKEARRPE).

The protein belongs to the dUTPase family. The cofactor is Mg(2+).

It carries out the reaction dUTP + H2O = dUMP + diphosphate + H(+). The protein operates within pyrimidine metabolism; dUMP biosynthesis; dUMP from dCTP (dUTP route): step 2/2. Involved in nucleotide metabolism: produces dUMP, the immediate precursor of thymidine nucleotides and decreases the intracellular concentration of dUTP to avoid uracil incorporation into viral DNA. The polypeptide is Deoxyuridine 5'-triphosphate nucleotidohydrolase (Murid herpesvirus 1 (strain Smith) (MuHV-1)).